A 97-amino-acid polypeptide reads, in one-letter code: Aspartyl/glutamyl-tRNA(Asn/Gln) amidotransferase subunit C (97 aa).

This sequence belongs to the GatC family. As to quaternary structure, heterotrimer of A, B and C subunits.

The catalysed reaction is L-glutamyl-tRNA(Gln) + L-glutamine + ATP + H2O = L-glutaminyl-tRNA(Gln) + L-glutamate + ADP + phosphate + H(+). The enzyme catalyses L-aspartyl-tRNA(Asn) + L-glutamine + ATP + H2O = L-asparaginyl-tRNA(Asn) + L-glutamate + ADP + phosphate + 2 H(+). In terms of biological role, allows the formation of correctly charged Asn-tRNA(Asn) or Gln-tRNA(Gln) through the transamidation of misacylated Asp-tRNA(Asn) or Glu-tRNA(Gln) in organisms which lack either or both of asparaginyl-tRNA or glutaminyl-tRNA synthetases. The reaction takes place in the presence of glutamine and ATP through an activated phospho-Asp-tRNA(Asn) or phospho-Glu-tRNA(Gln). This Prochlorococcus marinus (strain MIT 9211) protein is Aspartyl/glutamyl-tRNA(Asn/Gln) amidotransferase subunit C.